A 954-amino-acid polypeptide reads, in one-letter code: DNA repair and telomere maintenance protein NBS1 (954 aa).

In terms of domain architecture, FHA spans 22 to 85; it reads YLFGRTVAEA…KGTLVNGVQI (64 aa). 2 consecutive BRCT domains span residues 107–186 and 244–349; these read TLKI…NAIV and GYTF…LEAI. Polar residues predominate over residues 368–377; that stretch reads VSVSASVEPQ. 5 disordered regions span residues 368 to 431, 444 to 506, 528 to 580, 630 to 654, and 692 to 954; these read VSVS…FKGF, QAQS…PLPE, IEAG…KQED, VRQP…WDPR, and GIGD…GRRR. Residues 378-393 are compositionally biased toward basic and acidic residues; sequence SSEKVRPAVEDRKEVE. Residues 416-428 show a composition bias toward basic residues; the sequence is PHRRERRTGRSRF. Over residues 458-471 the composition is skewed to polar residues; it reads PSASQDSLFVSQRE. The span at 541–554 shows a compositional bias: acidic residues; that stretch reads PEPEREDEDVEMVE. 2 stretches are compositionally biased toward basic and acidic residues: residues 640–654 and 704–715; these read RTRE…WDPR and GRVPRRPKETQT. The span at 726 to 737 shows a compositional bias: low complexity; sequence DGSGFAAAAASG. Over residues 738–751 the composition is skewed to basic and acidic residues; it reads KGKEKDKENEKEVG. 2 stretches are compositionally biased toward low complexity: residues 801-815 and 826-842; these read EVVS…ASEP and RANA…SQTQ. Acidic residues predominate over residues 936–945; that stretch reads GSEEESEDDE.

This sequence belongs to the Nibrin family. As to quaternary structure, component of the MRN complex composed of two heterodimers RAD50 and MRE11 associated with a single NBS1.

Its subcellular location is the nucleus. It localises to the chromosome. Component of the MRN complex, which plays a central role in double-strand break (DSB) repair, DNA recombination, maintenance of telomere integrity and meiosis. The MRN complex is involved in the repair of DNA double-strand breaks (DSBs) via homologous recombination (HR), an error-free mechanism which primarily occurs during S and G2 phases. The complex (1) mediates the end resection of damaged DNA, which generates proper single-stranded DNA, a key initial steps in HR, and is (2) required for the recruitment of other repair factors and efficient activation of ATM and ATR upon DNA damage. The MRN complex possesses single-strand endonuclease activity and double-strand-specific 3'-5' exonuclease activity, which are provided by MRE11, to initiate end resection, which is required for single-strand invasion and recombination. Within the MRN complex, NBS1 acts as a protein-protein adapter, which specifically recognizes and binds phosphorylated proteins, promoting their recruitment to DNA damage sites. Recruits MRE11 and RAD50 components of the MRN complex to DSBs in response to DNA damage. This Chaetomium thermophilum (strain DSM 1495 / CBS 144.50 / IMI 039719) (Thermochaetoides thermophila) protein is DNA repair and telomere maintenance protein NBS1.